The primary structure comprises 354 residues: Peroxisomal membrane protein PEX32 (354 aa).

5 helical membrane-spanning segments follow: residues 24–44 (LLNMPPVITTALYTAFPVIFL), 63–83 (FIAIAIYIMVVKYWTVVACTV), 84–104 (LPTIIALGTCASLWFLKTTID), 151–171 (GFSLIAITPCYIWLMTRIFTV), and 173–193 (SFLLVFGVAWLSFHSSWSVAT). N-linked (GlcNAc...) asparagine glycosylation is present at Asn319.

The protein belongs to the PEX28-32 family. PEX30/31 subfamily.

Its subcellular location is the peroxisome membrane. The protein resides in the endoplasmic reticulum membrane. Functionally, with PEX24, contributes to tethering of peroxisomes to the endoplasmic reticulum for organelle biogenesis, positioning and segregation. This is Peroxisomal membrane protein PEX32 from Ogataea parapolymorpha (strain ATCC 26012 / BCRC 20466 / JCM 22074 / NRRL Y-7560 / DL-1) (Yeast).